The sequence spans 492 residues: N-succinylglutamate 5-semialdehyde dehydrogenase (492 aa).

220 to 225 provides a ligand contact to NAD(+); the sequence is GSANTG. Residues glutamate 243 and cysteine 277 contribute to the active site.

Belongs to the aldehyde dehydrogenase family. AstD subfamily.

The enzyme catalyses N-succinyl-L-glutamate 5-semialdehyde + NAD(+) + H2O = N-succinyl-L-glutamate + NADH + 2 H(+). It participates in amino-acid degradation; L-arginine degradation via AST pathway; L-glutamate and succinate from L-arginine: step 4/5. Its function is as follows. Catalyzes the NAD-dependent reduction of succinylglutamate semialdehyde into succinylglutamate. This Escherichia coli O139:H28 (strain E24377A / ETEC) protein is N-succinylglutamate 5-semialdehyde dehydrogenase.